The sequence spans 491 residues: MSESNVSWEVVIGLETHVQLGTKSKIFTSASTTFGDDPNTHIDPVVCGLPGTLPVLNKKVLEYAVKAAMALNLNIASHSKFDRKQYFYPDLPKNYQISQFDEPIAEDGWIEVEVAEKGKETYVKKIGIERLHMEEDAGKLVHAGSDQLSGSTHSLVDYNRAGVALAEIVSKPDLRTGREAAEYAAEVRRIMRYLGVSDGNMQEGSLRCDVNISVRPTINDPFGTKVEIKNMNSFSAIQKACEYEIKRQIKAYESGEEVKQETRLWDEGKQLTKSMRSKEGSSDYRYFPDPDLGPIEVSNELKEKWRSELPELPAAKRNRYSTELGLSIYDARVLTDESSMATYFEKVVNEGGAAKSSANWITGDLAAYIKSNRLTFDQLHFQPSELAEMLKMIDTGEISGKIAKEILPELLSKGGSPKQLVQERGLGMIGDPKVIEEIIDQLILKHPNEVESFRSGKKKLLGFFVGQLMKETKGKADPKLANQILNKKLQA.

This sequence belongs to the GatB/GatE family. GatB subfamily. In terms of assembly, heterotrimer of A, B and C subunits.

The catalysed reaction is L-glutamyl-tRNA(Gln) + L-glutamine + ATP + H2O = L-glutaminyl-tRNA(Gln) + L-glutamate + ADP + phosphate + H(+). It carries out the reaction L-aspartyl-tRNA(Asn) + L-glutamine + ATP + H2O = L-asparaginyl-tRNA(Asn) + L-glutamate + ADP + phosphate + 2 H(+). Allows the formation of correctly charged Asn-tRNA(Asn) or Gln-tRNA(Gln) through the transamidation of misacylated Asp-tRNA(Asn) or Glu-tRNA(Gln) in organisms which lack either or both of asparaginyl-tRNA or glutaminyl-tRNA synthetases. The reaction takes place in the presence of glutamine and ATP through an activated phospho-Asp-tRNA(Asn) or phospho-Glu-tRNA(Gln). The polypeptide is Aspartyl/glutamyl-tRNA(Asn/Gln) amidotransferase subunit B (Prochlorococcus marinus (strain NATL2A)).